Consider the following 124-residue polypeptide: Astakine (124 aa).

Positions 1–21 (MAVSSAVRMLSVACLVVSAAG) are cleaved as a signal peptide. Cystine bridges form between Cys-28–Cys-40, Cys-34–Cys-52, Cys-39–Cys-91, Cys-62–Cys-99, and Cys-93–Cys-106.

It belongs to the AVIT (prokineticin) family.

It localises to the secreted. In terms of biological role, cytokine directly involved in hematopoiesis. This Penaeus monodon (Giant tiger prawn) protein is Astakine.